The sequence spans 286 residues: Urease accessory protein UreD 2 (286 aa).

It belongs to the UreD family. In terms of assembly, ureD, UreF and UreG form a complex that acts as a GTP-hydrolysis-dependent molecular chaperone, activating the urease apoprotein by helping to assemble the nickel containing metallocenter of UreC. The UreE protein probably delivers the nickel.

It localises to the cytoplasm. Its function is as follows. Required for maturation of urease via the functional incorporation of the urease nickel metallocenter. The protein is Urease accessory protein UreD 2 of Bradyrhizobium sp. (strain BTAi1 / ATCC BAA-1182).